Reading from the N-terminus, the 855-residue chain is Suppressor of tumorigenicity 14 protein (855 aa).

Positions 1–20 are disordered; it reads MGSDRARKGGGGPKDFGAGL. The Cytoplasmic segment spans residues 1-55; sequence MGSDRARKGGGGPKDFGAGLKYNSRHEKVNGLEEGVEFLPVNNVKKVEKHGPGRW. The chain crosses the membrane as a helical; Signal-anchor for type II membrane protein span at residues 56–76; that stretch reads VVLAAVLIGLLLVLLGIGFLV. At 77–855 the chain is on the extracellular side; it reads WHLQYRDVRV…RDWIKENTGV (779 aa). Residues 86–203 form the SEA domain; it reads VQKVFNGYMR…TSVVAFPTDS (118 aa). N109 carries N-linked (GlcNAc...) asparagine glycosylation. An intrachain disulfide couples C214 to C244. CUB domains are found at residues 214–334 and 340–447; these read CSFG…FFQL and CGGR…YLSY. N-linked (GlcNAc...) asparagine glycosylation is present at N302. Intrachain disulfides connect C340–C366, C397–C410, C453–C464, C459–C477, C471–C486, C488–C501, C496–C514, C508–C523, C525–C537, C532–C550, C544–C559, C567–C579, C574–C593, C587–C602, and C641–C657. 4 consecutive LDL-receptor class A domains span residues 452–487, 487–524, 524–560, and 566–603; these read PCPGQFTCRTGRCIRKELRCDGWADCTDHSDELNCS, SCDAGHQFTCKNKFCKPLFWVCDSVNDCGDNSDEQGCS, SCPAQTFRCSNGKCLSKSQQCNGKDDCGDGSDEASCP, and TCTKHTYRCLNGLCLSKGNPECDGKEDCSDGSDEKDCD. A glycan (N-linked (GlcNAc...) asparagine) is linked at N485. Residues 615–854 form the Peptidase S1 domain; that stretch reads VVGGTDADEG…FRDWIKENTG (240 aa). Catalysis depends on charge relay system residues H656 and D711. The N-linked (GlcNAc...) asparagine glycan is linked to N772. 2 disulfides stabilise this stretch: C776–C790 and C801–C830. Residue S805 is the Charge relay system of the active site.

The protein belongs to the peptidase S1 family. Interacts with CDCP1. May interact with TMEFF1. Interacts with iripin-3, a serine protease inhibitor from Ixodes ricinus saliva. Interacts with iripin-1, a serine protease inhibitor from Ixodes ricinus saliva.

It is found in the membrane. The catalysed reaction is Cleaves various synthetic substrates with Arg or Lys at the P1 position and prefers small side-chain amino acids, such as Ala and Gly, at the P2 position.. Exhibits trypsin-like activity as defined by cleavage of synthetic substrates with Arg or Lys as the P1 site. Involved in the terminal differentiation of keratinocytes through prostasin (PRSS8) activation and filaggrin (FLG) processing. Proteolytically cleaves and therefore activates TMPRSS13. The protein is Suppressor of tumorigenicity 14 protein (ST14) of Homo sapiens (Human).